The sequence spans 640 residues: Probable inactive receptor kinase At3g08680 (640 aa).

An N-terminal signal peptide occupies residues 1-22 (MMKIIAAFLFLLVTTFVSRCLS). LRR repeat units lie at residues 93 to 115 (ALRIISLRSNHLQGNIPSVILSL), 117 to 138 (FIRSLYFHENNFSGTIPPVLSH), 139 to 162 (RLVNLDLSANSLSGNIPTSLQNLT), 163 to 185 (QLTDLSLQNNSLSGPIPNLPPRL), and 186 to 206 (KYLNLSFNNLNGSVPSSVKSF). The tract at residues 222 to 249 (LTPCPENTTAPSPSPTTPTEGPGTTNIG) is disordered. The segment covering 226–247 (PENTTAPSPSPTTPTEGPGTTN) has biased composition (low complexity). The helical transmembrane segment at 260-280 (GAIVGIAVGGSVLLFIILAII) threads the bilayer. The interval 289–315 (DGGQDSTAVPKAKPGRSDNKAEEFGSG) is disordered. Positions 341-614 (RASAEVLGKG…EEVVNMMEEI (274 aa)) constitute a Protein kinase domain. The residue at position 343 (serine 343) is a Phosphoserine. 347-355 (LGKGSYGTT) serves as a coordination point for ATP. A Phosphothreonine modification is found at threonine 364. Position 369 (lysine 369) interacts with ATP. Phosphothreonine is present on residues threonine 441, threonine 514, and threonine 564. Positions 612–640 (EEIRPSGSGPGSGNRASSPEMIRSSDSPV) are disordered.

Belongs to the protein kinase superfamily. Tyr protein kinase family.

Its subcellular location is the membrane. This chain is Probable inactive receptor kinase At3g08680, found in Arabidopsis thaliana (Mouse-ear cress).